A 543-amino-acid polypeptide reads, in one-letter code: Ribonuclease Y (543 aa).

The helical transmembrane segment at 4–24 threads the bilayer; the sequence is IIMIPVATAIVSLLVGTVTGY. The region spanning 233–296 is the KH domain; the sequence is TVSVVDLPNE…EIAKRAMERL (64 aa). An HD domain is found at 359–452; the sequence is VLSHSIEVGK…VVAADTISSA (94 aa).

Belongs to the RNase Y family.

It is found in the cell membrane. In terms of biological role, endoribonuclease that initiates mRNA decay. This Lactobacillus acidophilus (strain ATCC 700396 / NCK56 / N2 / NCFM) protein is Ribonuclease Y.